Consider the following 175-residue polypeptide: Protein LpfE (175 aa).

The signal sequence occupies residues 1 to 20 (MKNLHALMPACLLLTASAMA).

Belongs to the fimbrial protein family.

It localises to the fimbrium. This chain is Protein LpfE (lpfE), found in Salmonella typhimurium (strain LT2 / SGSC1412 / ATCC 700720).